The primary structure comprises 21 residues: Buforin-2 (21 aa).

The residue at position 21 (lysine 21) is an N6-(2-hydroxyisobutyryl)lysine; alternate.

It belongs to the histone H2A family. Expressed by the skin glands.

The protein resides in the secreted. In terms of biological role, antimicrobial peptide with potent activity against some Gram-positive and Gram-negative bacteria. Does not permeabilize membrane, but internalizes into bacterial cells and alter specific gene expression involved in bacterial resistance mechanisms. Has the ability to agglutinate E.coli, and lipid vesicles. Shows a weak hemolytic activity, and is not cytotoxic to monocytes. The protein is Buforin-2 of Sphaenorhynchus lacteus (Orinoco lime treefrog).